A 141-amino-acid polypeptide reads, in one-letter code: Nucleoside triphosphatase NudI (141 aa).

The region spanning 1 to 141 is the Nudix hydrolase domain; sequence MRQRTIVCPL…RKTLSLKGLL (141 aa). The Nudix box motif lies at 38–59; sequence GGVEPGERIEDALRREIREELG.

This sequence belongs to the Nudix hydrolase family. NudI subfamily. Monomer. The cofactor is Mg(2+).

The catalysed reaction is a ribonucleoside 5'-triphosphate + H2O = a ribonucleoside 5'-phosphate + diphosphate + H(+). It carries out the reaction a 2'-deoxyribonucleoside 5'-triphosphate + H2O = a 2'-deoxyribonucleoside 5'-phosphate + diphosphate + H(+). It catalyses the reaction dUTP + H2O = dUMP + diphosphate + H(+). The enzyme catalyses dTTP + H2O = dTMP + diphosphate + H(+). The catalysed reaction is dCTP + H2O = dCMP + diphosphate + H(+). Catalyzes the hydrolysis of nucleoside triphosphates, with a preference for pyrimidine deoxynucleoside triphosphates (dUTP, dTTP and dCTP). This Escherichia fergusonii (strain ATCC 35469 / DSM 13698 / CCUG 18766 / IAM 14443 / JCM 21226 / LMG 7866 / NBRC 102419 / NCTC 12128 / CDC 0568-73) protein is Nucleoside triphosphatase NudI.